A 201-amino-acid polypeptide reads, in one-letter code: Inosine triphosphate pyrophosphatase (201 aa).

Position 13-18 (13-18 (TGNAKK)) interacts with ITP. Residue Glu43 participates in Mg(2+) binding. Residues Lys55, 71-72 (DT), Lys88, 148-151 (FGWD), Lys171, and 176-177 (HR) each bind ITP.

The protein belongs to the HAM1 NTPase family. Homodimer. It depends on Mg(2+) as a cofactor. The cofactor is Mn(2+).

The protein localises to the cytoplasm. The catalysed reaction is ITP + H2O = IMP + diphosphate + H(+). It catalyses the reaction dITP + H2O = dIMP + diphosphate + H(+). It carries out the reaction XTP + H2O = XMP + diphosphate + H(+). The enzyme catalyses N(6)-hydroxy-dATP + H2O = N(6)-hydroxy-dAMP + diphosphate + H(+). Pyrophosphatase that hydrolyzes the non-canonical purine nucleotides inosine triphosphate (ITP), deoxyinosine triphosphate (dITP) as well as 2'-deoxy-N-6-hydroxylaminopurine triphosphate (dHAPTP) and xanthosine 5'-triphosphate (XTP) to their respective monophosphate derivatives. The enzyme does not distinguish between the deoxy- and ribose forms. Probably excludes non-canonical purines from RNA and DNA precursor pools, thus preventing their incorporation into RNA and DNA and avoiding chromosomal lesions. The chain is Inosine triphosphate pyrophosphatase from Gallus gallus (Chicken).